Here is a 943-residue protein sequence, read N- to C-terminus: Coiled-coil and C2 domain-containing protein 1A (943 aa).

Threonine 91 is modified (phosphothreonine). 2 disordered regions span residues 186–250 (NEAD…CSPL) and 300–337 (DLSR…VPQP). Low complexity-rich tracts occupy residues 195–206 (ASGKGAAAGHSH) and 229–238 (APSTTTPTSA). Serine 248 carries the post-translational modification Phosphoserine. Pro residues predominate over residues 304-319 (LPPPPDQLSPEPPLPA). Positions 339-385 (RNLLEALEQRMERYHVAAAQAKAKGDQRKARMHERIVKQYQDAIRAH) form a coiled coil. Residues 430 to 483 (NHDEGSDDEEEETPKKQNTPAASTTQLKSSPSKAPPSGPAPAGKAAPKGTSNRA) are disordered. A Phosphoserine modification is found at serine 435. Polar residues predominate over residues 445 to 456 (KQNTPAASTTQL). Residues 469–478 (APAGKAAPKG) show a composition bias toward low complexity. Residues 477–510 (KGTSNRAQQQLAFLEGRKKQLLQAALRAKQKNDV) are a coiled coil. In terms of domain architecture, C2 spans 630-764 (RFEQRTFSVI…ETACEVHEIL (135 aa)).

Belongs to the CC2D1 family. In terms of tissue distribution, highly expressed in brain, expression is enriched in the gray matter and strongest in the olfactory bulb.

Its subcellular location is the cytoplasm. It is found in the nucleus. It localises to the cytoskeleton. The protein resides in the microtubule organizing center. The protein localises to the centrosome. In terms of biological role, transcription factor that binds specifically to the DRE (dual repressor element) and represses HTR1A gene transcription in neuronal cells. The combination of calcium and ATP specifically inactivates the binding with FRE. May play a role in the altered regulation of HTR1A associated with anxiety and major depression. Mediates HDAC-independent repression of HTR1A promoter in neuronal cell. Performs essential function in controlling functional maturation of synapses. This chain is Coiled-coil and C2 domain-containing protein 1A (Cc2d1a), found in Mus musculus (Mouse).